The primary structure comprises 354 residues: Guanine nucleotide-binding protein G(o) subunit alpha (354 aa).

Residue Gly2 is the site of N-myristoyl glycine attachment. Cys3 carries S-palmitoyl cysteine lipidation. The G-alpha domain maps to 32–354 (KDVKLLLLGA…ANNLRGCGLY (323 aa)). The segment at 35-48 (KLLLLGAGESGKST) is G1 motif. Residues Glu43, Lys46, Ser47, Thr48, Ser152, Leu176, Arg177, Thr178, and Arg179 each contribute to the GTP site. Ser47 serves as a coordination point for Mg(2+). Residues 174-182 (DILRTRVKT) form a G2 motif region. Thr182 lines the Mg(2+) pocket. The interval 197-206 (FRLFDVGGQR) is G3 motif. Residue Gln205 is modified to 5-glutamyl histamine. Residues 266–273 (ILFLNKKD) are G4 motif. Residues Asn270, Asp273, and Cys325 each contribute to the GTP site. The segment at 324–329 (TCATDT) is G5 motif. Cys351 carries the S-palmitoyl cysteine lipid modification.

This sequence belongs to the G-alpha family. G(i/o/t/z) subfamily. As to quaternary structure, g proteins are composed of 3 units; alpha, beta and gamma. The alpha chain contains the guanine nucleotide binding site. Forms a complex with GNB1 and GNG3. Interacts with RGS14. Interacts with RGS16. Interacts with RGS19. Interacts (when palmitoylated) with ADGRG3. Post-translationally, histaminylated at Gln-205 residues by TGM2.

It localises to the cell membrane. Its subcellular location is the membrane. It carries out the reaction GTP + H2O = GDP + phosphate + H(+). The GTPase activity is promoted by GTPAse activators, such as RGS14, RGS16 and RGS19. Guanine nucleotide-binding proteins (G proteins) function as transducers downstream of G protein-coupled receptors (GPCRs) in numerous signaling cascades. The alpha chain contains the guanine nucleotide binding site and alternates between an active, GTP-bound state and an inactive, GDP-bound state. Signaling by an activated GPCR promotes GDP release and GTP binding. The alpha subunit has a low GTPase activity that converts bound GTP to GDP, thereby terminating the signal. Both GDP release and GTP hydrolysis are modulated by numerous regulatory proteins. Signaling is mediated via effector proteins, such as adenylate cyclase. Inhibits adenylate cyclase activity, leading to decreased intracellular cAMP levels. This chain is Guanine nucleotide-binding protein G(o) subunit alpha (Gnao1), found in Mus musculus (Mouse).